Reading from the N-terminus, the 341-residue chain is Paired box protein Pax-9 (341 aa).

A DNA-binding region (paired) is located at residues 4 to 130; the sequence is AFGEVNQLGG…SSISRILRNK (127 aa). Residues 7–63 are PAI subdomain; the sequence is EVNQLGGVFVNGRPLPNAIRLRIVELAQLGIRPCDISRQLRVSHGCVSKILARYNET. An RED subdomain region spans residues 82 to 130; that stretch reads TVVKHIRTYKQRDPGIFAWEIRDRLLADGVCDKYNVPSVSSISRILRNK. Residues 168–189 are interaction with KDM5B; it reads AAAAKVPTPPGVPAIPGSVAMP.

As to quaternary structure, interacts with KDM5B.

It localises to the nucleus. Its function is as follows. Transcription factor required for normal development of thymus, parathyroid glands, ultimobranchial bodies, teeth, skeletal elements of skull and larynx as well as distal limbs. This Callithrix jacchus (White-tufted-ear marmoset) protein is Paired box protein Pax-9 (PAX9).